Consider the following 117-residue polypeptide: Ribonuclease P protein component (117 aa).

It belongs to the RnpA family. Consists of a catalytic RNA component (M1 or rnpB) and a protein subunit.

It carries out the reaction Endonucleolytic cleavage of RNA, removing 5'-extranucleotides from tRNA precursor.. Its function is as follows. RNaseP catalyzes the removal of the 5'-leader sequence from pre-tRNA to produce the mature 5'-terminus. It can also cleave other RNA substrates such as 4.5S RNA. The protein component plays an auxiliary but essential role in vivo by binding to the 5'-leader sequence and broadening the substrate specificity of the ribozyme. The protein is Ribonuclease P protein component of Desulforapulum autotrophicum (strain ATCC 43914 / DSM 3382 / VKM B-1955 / HRM2) (Desulfobacterium autotrophicum).